We begin with the raw amino-acid sequence, 221 residues long: Ras-related protein RABA5a (221 aa).

GTP is bound at residue 21–28 (GDSAVGKS). Residues 43 to 51 (SKSTIGVEF) carry the Effector region motif. GTP is bound by residues 69–73 (DTAGQ), 127–130 (NKSD), and 157–158 (SA). 2 S-geranylgeranyl cysteine lipidation sites follow: Cys-218 and Cys-219.

It belongs to the small GTPase superfamily. Rab family.

It localises to the cell membrane. Intracellular vesicle trafficking and protein transport. This is Ras-related protein RABA5a (RABA5A) from Arabidopsis thaliana (Mouse-ear cress).